A 485-amino-acid polypeptide reads, in one-letter code: Predicted GPI-anchored protein 27 (485 aa).

The first 20 residues, 1-20, serve as a signal peptide directing secretion; the sequence is MHFTSSLLATLIWFTLPVQS. Asn30, Asn86, Asn96, and Asn444 each carry an N-linked (GlcNAc...) asparagine glycan. A lipid anchor (GPI-anchor amidated glycine) is attached at Gly467. A propeptide spans 468–485 (removed in mature form); it reads LVLVSSGVLLGTCLLFIL.

The protein resides in the cell membrane. This chain is Predicted GPI-anchored protein 27 (PGA27), found in Candida albicans (strain SC5314 / ATCC MYA-2876) (Yeast).